A 388-amino-acid polypeptide reads, in one-letter code: Granulocyte-macrophage colony-stimulating factor receptor subunit alpha (388 aa).

An N-terminal signal peptide occupies residues 1–29 (MTSSHAMNITPLAQLALLFSTLLLPGTQA). The Extracellular segment spans residues 30 to 327 (LLAPTTPDAG…PLEAEDTRVP (298 aa)). N-linked (GlcNAc...) asparagine glycosylation is found at N43, N63, N106, N132, N165, and N237. In terms of domain architecture, Fibronectin type-III spans 228–324 (PPRDVTASCN…PAHPLEAEDT (97 aa)). Residues 310 to 314 (WGEWS) carry the WSXWS motif motif. Residues 328 to 348 (GALLYAVTACAVLLCALALGV) form a helical membrane-spanning segment. Residues 349 to 388 (TCRRFEVTRRLFPPIPGIRDKVSDDVRVNPETLRKDLLQP) are Cytoplasmic-facing. Residues 359–367 (LFPPIPGIR) carry the Box 1 motif motif.

It belongs to the type I cytokine receptor family. Type 5 subfamily. In terms of assembly, heterodimer of an alpha and a beta subunit. The beta subunit is common to the IL3, IL5 and GM-CSF receptors. The signaling GM-CSF receptor complex is a dodecamer of two head-to-head hexamers of two alpha, two beta, and two ligand subunits.

It localises to the membrane. In terms of biological role, low affinity receptor for granulocyte-macrophage colony-stimulating factor. Transduces a signal that results in the proliferation, differentiation, and functional activation of hematopoietic cells. In Mus musculus (Mouse), this protein is Granulocyte-macrophage colony-stimulating factor receptor subunit alpha (Csf2ra).